The sequence spans 850 residues: MSGSVWDIEGLLCEDDIPYEQEVAKNPNNLSNWLRYYRFKSSTSSCTFQNRVFILERAVKQLPRSYKLWMIYIDVVLQEVQTSVSYKSKSEILSVNMVFERSLQLLNRAPILWIKYLEFLVETQPYEITLLRRKFNECLYNLPISQHHLIWPLYIRFADDVGGMTGVKVYLKYLQYANPESLQGLNNEQEGELGITIDDIISKLVEFGDVKEASKLFQHILQHTDKFIGLSKSPLQLWIEYIDLLVNSVSKNKRSTVNYNEFDYFFEKLIKDGLQKFPDQIGKFYLKLTFYFIKRKNLFKARYYFDEGLKTCVSVKDFTMIFDSYTEFEENILTNMSEKLEKLGEDSDLNNELDLRMNVFEKLINDRPYLLNDMMLRQDVNNLDEWFKKIVLYKKDSDINMMLDTYAAALRTINPLKAHSLANKKENTLPNLWINYANVYASQNDVKTANLIFSKSVKSQFQSPDDLATLYIEWCELFVKHNDDKKAIEIVEDICTSERGKFDYNDSSIDIHIRVQKSIKLWSFYLDLLESMIENNNQIDEIEKVINAYNITIDLKIATPLTIINFANFLEEWNFYERSFSAYEMGLKIFKDSKIKFEIWNIYLSKIIKHELNIERIRDLFEQCLNESSIEGYNGCPANLCKPVYLLYSQYEQSKGWFTKSVKILQQGLSKLDDGYNQEFYTKAEKDTILRDKFDIYQVLISKILKLNDHNETRKIYEQSLKDNQLTLPNLIQLTMEFINFETELMEFNRVRSLFKYVCQLSNPQSPLIEPIWHNWETFELNHGNEATFKDMLRFKRKIVTEFEKDIILKNSLNPMGFVKSSQGPKVSSIAISAPKEENNPDSIDLDMDM.

HAT repeat units follow at residues 10–42 (GLLC…FKSS), 46–78 (CTFQ…VVLQ), 90–122 (SEIL…FLVE), 126–160 (YEIT…FADD), 208–247 (GDVK…LLVN), 408–442 (AALR…VYAS), 444–480 (NDVK…LFVK), 500–531 (GKFD…LLES), 574–609 (NFYE…KIIK), 612–653 (LNIE…QYEQ), 708–744 (NDHN…FETE), and 746–782 (MEFN…FELN).

It belongs to the crooked-neck family. As to quaternary structure, associated with the spliceosome.

The protein resides in the nucleus. Its function is as follows. Involved in pre-mRNA splicing and cell cycle progression. In Debaryomyces hansenii (strain ATCC 36239 / CBS 767 / BCRC 21394 / JCM 1990 / NBRC 0083 / IGC 2968) (Yeast), this protein is Pre-mRNA-splicing factor SYF1 (SYF1).